Consider the following 187-residue polypeptide: UPF0398 protein LBA1157 (187 aa).

The protein belongs to the UPF0398 family.

This chain is UPF0398 protein LBA1157, found in Lactobacillus acidophilus (strain ATCC 700396 / NCK56 / N2 / NCFM).